Reading from the N-terminus, the 390-residue chain is Chorismate synthase (390 aa).

Residues R39 and R45 each coordinate NADP(+). FMN is bound by residues 132 to 134 (RSS), 253 to 254 (NA), G298, 313 to 317 (KPIPT), and R339.

This sequence belongs to the chorismate synthase family. Homotetramer. FMNH2 serves as cofactor.

The catalysed reaction is 5-O-(1-carboxyvinyl)-3-phosphoshikimate = chorismate + phosphate. The protein operates within metabolic intermediate biosynthesis; chorismate biosynthesis; chorismate from D-erythrose 4-phosphate and phosphoenolpyruvate: step 7/7. In terms of biological role, catalyzes the anti-1,4-elimination of the C-3 phosphate and the C-6 proR hydrogen from 5-enolpyruvylshikimate-3-phosphate (EPSP) to yield chorismate, which is the branch point compound that serves as the starting substrate for the three terminal pathways of aromatic amino acid biosynthesis. This reaction introduces a second double bond into the aromatic ring system. The sequence is that of Chorismate synthase from Bacillus velezensis (strain DSM 23117 / BGSC 10A6 / LMG 26770 / FZB42) (Bacillus amyloliquefaciens subsp. plantarum).